The primary structure comprises 70 residues: Large ribosomal subunit protein bL28 (70 aa).

The interval 1-26 (MAKRCEVCGKAPRSGNTVSHSDKKSG) is disordered.

It belongs to the bacterial ribosomal protein bL28 family.

The chain is Large ribosomal subunit protein bL28 (rpmB) from Thermotoga maritima (strain ATCC 43589 / DSM 3109 / JCM 10099 / NBRC 100826 / MSB8).